Here is a 399-residue protein sequence, read N- to C-terminus: tRNA-specific 2-thiouridylase MnmA (399 aa).

ATP is bound by residues 18-25 and Leu-44; that span reads AMSGGVDS. Cys-112 (nucleophile) is an active-site residue. An intrachain disulfide couples Cys-112 to Cys-213. Gly-136 contributes to the ATP binding site. Positions 163–165 are interaction with tRNA; sequence RDQ. Cys-213 (cysteine persulfide intermediate) is an active-site residue.

The protein belongs to the MnmA/TRMU family.

The protein resides in the cytoplasm. It carries out the reaction S-sulfanyl-L-cysteinyl-[protein] + uridine(34) in tRNA + AH2 + ATP = 2-thiouridine(34) in tRNA + L-cysteinyl-[protein] + A + AMP + diphosphate + H(+). Functionally, catalyzes the 2-thiolation of uridine at the wobble position (U34) of tRNA, leading to the formation of s(2)U34. The chain is tRNA-specific 2-thiouridylase MnmA from Rhizobium rhizogenes (strain K84 / ATCC BAA-868) (Agrobacterium radiobacter).